The sequence spans 283 residues: Non-selective voltage-gated ion channel VDAC3 (283 aa).

Cys-2 is modified (N-acetylcysteine). At Thr-4 the chain carries Phosphothreonine. N6-acetyllysine occurs at positions 12, 15, and 20. 2 beta stranded membrane passes run 26-35 (MVKIDLRTKS) and 39-47 (VEFSTSGHA). Lys-53 participates in a covalent cross-link: Glycyl lysine isopeptide (Lys-Gly) (interchain with G-Cter in ubiquitin). Transmembrane regions (beta stranded) follow at residues 54 to 64 (ASGNLETKYKI), 69 to 76 (LTFTQKWN), and 80 to 89 (TLGTEISWEN). Position 90 is an N6-acetyllysine (Lys-90). The chain crosses the membrane as a beta stranded span at residues 95–104 (LKLTLDTIFV). Residues Lys-109 and Lys-110 each participate in a glycyl lysine isopeptide (Lys-Gly) (interchain with G-Cter in ubiquitin) cross-link. Transmembrane regions (beta stranded) follow at residues 111 to 120 (SGKLKASYKR), 123 to 130 (FSLGSNVD), 137 to 145 (TIYGWAVLA), 150 to 158 (LAGYQMSFD), 163 to 175 (KLSQNNFALGYKA), 178 to 185 (FQLHTHVN), 189 to 198 (EFGGSIYQKV), 202 to 211 (IETSINLAWT), 218 to 227 (RFGIAAKYKL), and 231 to 238 (TSLSAKVN). Position 241 is a phosphoserine (Ser-241). NAD(+)-binding positions include 242–244 (LIG) and 260–264 (SALID). 2 beta stranded membrane passes run 242–251 (LIGLGYTQTL) and 254–263 (GVKLTLSALI). N6-acetyllysine; alternate is present on Lys-266. Residue Lys-266 forms a Glycyl lysine isopeptide (Lys-Gly) (interchain with G-Cter in ubiquitin); alternate linkage. Residues 273–282 (HKVGLGFELE) form a beta stranded membrane-spanning segment.

Belongs to the eukaryotic mitochondrial porin family. In terms of assembly, interacts with ARMC12 in a TBC1D21-dependent manner. Interacts with MISFA. Ubiquitinated by PRKN during mitophagy, leading to its degradation and enhancement of mitophagy. Deubiquitinated by USP30.

The protein resides in the mitochondrion outer membrane. It is found in the membrane. The enzyme catalyses chloride(in) = chloride(out). It catalyses the reaction K(+)(in) = K(+)(out). In terms of biological role, non-selective voltage-gated ion channel that mediates the transport of anions and cations through the mitochondrion outer membrane and plasma membrane. Forms a high-conducting channel with a stable open state and a voltage-induced closure with a mild preference for anions over cations. Involved in male fertility and sperm mitochondrial sheath formation. The chain is Non-selective voltage-gated ion channel VDAC3 from Bos taurus (Bovine).